We begin with the raw amino-acid sequence, 148 residues long: UPF0178 protein lpg0089 (148 aa).

It belongs to the UPF0178 family.

The chain is UPF0178 protein lpg0089 from Legionella pneumophila subsp. pneumophila (strain Philadelphia 1 / ATCC 33152 / DSM 7513).